We begin with the raw amino-acid sequence, 100 residues long: Aspartyl/glutamyl-tRNA(Asn/Gln) amidotransferase subunit C (100 aa).

It belongs to the GatC family. As to quaternary structure, heterotrimer of A, B and C subunits.

It catalyses the reaction L-glutamyl-tRNA(Gln) + L-glutamine + ATP + H2O = L-glutaminyl-tRNA(Gln) + L-glutamate + ADP + phosphate + H(+). The catalysed reaction is L-aspartyl-tRNA(Asn) + L-glutamine + ATP + H2O = L-asparaginyl-tRNA(Asn) + L-glutamate + ADP + phosphate + 2 H(+). Functionally, allows the formation of correctly charged Asn-tRNA(Asn) or Gln-tRNA(Gln) through the transamidation of misacylated Asp-tRNA(Asn) or Glu-tRNA(Gln) in organisms which lack either or both of asparaginyl-tRNA or glutaminyl-tRNA synthetases. The reaction takes place in the presence of glutamine and ATP through an activated phospho-Asp-tRNA(Asn) or phospho-Glu-tRNA(Gln). The polypeptide is Aspartyl/glutamyl-tRNA(Asn/Gln) amidotransferase subunit C (Petrotoga mobilis (strain DSM 10674 / SJ95)).